The chain runs to 133 residues: Triatox (133 aa).

The N-terminal stretch at 1 to 22 (MTTLRVLLAVCCAAYCILAEDV) is a signal peptide. Residues 23-125 (TVPANGELKL…RAMCTVYSAE (103 aa)) form the CUB domain. The cysteines at positions 70 and 86 are disulfide-linked.

The protein belongs to the venom CUB family. Expressed by the venom gland.

The protein resides in the secreted. May function as an antimicrobial peptide and may be related to the innate defense of the insect in the salivary glands. The polypeptide is Triatox (Triatoma infestans (Assassin bug)).